The sequence spans 209 residues: Orotate phosphoribosyltransferase (209 aa).

Residues arginine 96, lysine 100, histidine 102, and 122-130 (EDLISTGKS) contribute to the 5-phospho-alpha-D-ribose 1-diphosphate site. Serine 126 is a binding site for orotate.

It belongs to the purine/pyrimidine phosphoribosyltransferase family. PyrE subfamily. In terms of assembly, homodimer. Requires Mg(2+) as cofactor.

The catalysed reaction is orotidine 5'-phosphate + diphosphate = orotate + 5-phospho-alpha-D-ribose 1-diphosphate. It participates in pyrimidine metabolism; UMP biosynthesis via de novo pathway; UMP from orotate: step 1/2. Its function is as follows. Catalyzes the transfer of a ribosyl phosphate group from 5-phosphoribose 1-diphosphate to orotate, leading to the formation of orotidine monophosphate (OMP). The polypeptide is Orotate phosphoribosyltransferase (Coxiella burnetii (strain RSA 493 / Nine Mile phase I)).